Here is a 228-residue protein sequence, read N- to C-terminus: Aquaporin Z 1 (228 aa).

Helical transmembrane passes span 9-29 and 34-54; these read FLGT…AAAF and IGLL…AYAV. Positions 63 to 65 match the NPA 1 motif; it reads NPA. The next 3 helical transmembrane spans lie at 82–102, 129–149, and 156–176; these read VGYI…LYVI, LTAA…IILG, and PVGF…LVSI. The NPA 2 motif lies at 184 to 186; the sequence is NPA. The chain crosses the membrane as a helical span at residues 204-224; that stretch reads WLFWVAPLIGAVIAGIVWKIV.

The protein belongs to the MIP/aquaporin (TC 1.A.8) family. As to quaternary structure, homotetramer.

The protein resides in the cell inner membrane. It catalyses the reaction H2O(in) = H2O(out). Channel that permits osmotically driven movement of water in both directions. It is involved in the osmoregulation and in the maintenance of cell turgor during volume expansion in rapidly growing cells. It mediates rapid entry or exit of water in response to abrupt changes in osmolarity. The protein is Aquaporin Z 1 of Rhizobium meliloti (strain 1021) (Ensifer meliloti).